A 1365-amino-acid chain; its full sequence is DNA-directed RNA polymerase subunit beta' (1365 aa).

Positions 249, 316, 323, and 326 each coordinate Zn(2+).

The protein belongs to the RNA polymerase beta' chain family. RpoC2 subfamily. In cyanobacteria the RNAP catalytic core is composed of 2 alpha, 1 beta, 1 beta', 1 gamma and 1 omega subunit. When a sigma factor is associated with the core the holoenzyme is formed, which can initiate transcription. Zn(2+) serves as cofactor.

It carries out the reaction RNA(n) + a ribonucleoside 5'-triphosphate = RNA(n+1) + diphosphate. DNA-dependent RNA polymerase catalyzes the transcription of DNA into RNA using the four ribonucleoside triphosphates as substrates. This chain is DNA-directed RNA polymerase subunit beta', found in Synechococcus sp. (strain CC9311).